Consider the following 732-residue polypeptide: Catalase-peroxidase (732 aa).

The tract at residues 1–20 is disordered; the sequence is MDKDSKRPVVGSTVRGGMSN. Positions 92–220 form a cross-link, tryptophyl-tyrosyl-methioninium (Trp-Tyr) (with M-246); the sequence is WHSAGTYRMG…LAAVQMGLIY (129 aa). Residue histidine 93 is the Proton acceptor of the active site. The segment at residues 220-246 is a cross-link (tryptophyl-tyrosyl-methioninium (Tyr-Met) (with W-92)); it reads YVNPEGPDGNPDPVAAGYDVIETFARM. Histidine 261 is a heme b binding site.

It belongs to the peroxidase family. Peroxidase/catalase subfamily. In terms of assembly, homodimer or homotetramer. It depends on heme b as a cofactor. Formation of the three residue Trp-Tyr-Met cross-link is important for the catalase, but not the peroxidase activity of the enzyme.

It carries out the reaction H2O2 + AH2 = A + 2 H2O. It catalyses the reaction 2 H2O2 = O2 + 2 H2O. In terms of biological role, bifunctional enzyme with both catalase and broad-spectrum peroxidase activity. This chain is Catalase-peroxidase, found in Desulfosudis oleivorans (strain DSM 6200 / JCM 39069 / Hxd3) (Desulfococcus oleovorans).